The sequence spans 432 residues: Polyamine export protein (432 aa).

Residues 1 to 201 (MIMELFHTIL…AEAGVLKTQE (201 aa)) form the CNNM transmembrane domain. The next 4 membrane-spanning stretches (helical) occupy residues 2–22 (IMELFHTILAIVALILSSAVV), 61–81 (FITVVQILLNMVAILGGGIGE), 100–120 (WIAPTASTIAFILVTCLFILF), and 138–158 (LSVVGIMNFSMYVFKPLVWFF). CBS domains follow at residues 220-279 (MTTR…NENV) and 286-345 (LLRK…SNEE).

Belongs to the UPF0053 family. PaeA subfamily.

The protein localises to the cell inner membrane. Involved in cadaverine and putrescine tolerance in stationary phase. May facilitate the efflux of both cadaverine and putrescine from the cytoplasm, reducing potentially toxic levels under certain stress conditions. The polypeptide is Polyamine export protein (Haemophilus influenzae (strain ATCC 51907 / DSM 11121 / KW20 / Rd)).